The primary structure comprises 1000 residues: Chromosome transmission fidelity protein 18 homolog (1000 aa).

Disordered regions lie at residues 53–89, 130–159, and 272–301; these read SAGD…RDAS, AGNS…DSKF, and EFGE…SHSL. Residues 60–70 are compositionally biased toward polar residues; sequence SNANSKPTGDS. The segment covering 272-295 has biased composition (acidic residues); sequence EFGENDSEILENDDNAGEEDDEDE. 396–403 provides a ligand contact to ATP; that stretch reads GPPGLGKT. The segment covering 888–898 has biased composition (polar residues); the sequence is ARNAGRDNTTA. The segment at 888–916 is disordered; the sequence is ARNAGRDNTTAAAAVKTADPKGAKSAAKP.

Belongs to the activator 1 small subunits family. CTF18 subfamily. Component of the CTF18-RFC complex, which consists of ctf18, ctf8, dcc1, rfc2, rfc3, rfc4 and rfc5. The CTF18-RFC complex associates with pcna.

Its subcellular location is the nucleus. Chromosome cohesion factor involved in sister chromatid cohesion and fidelity of chromosome transmission. Component of one of the cell nuclear antigen loader complexes, CTF18-replication factor C (CTF18-RFC), which consists of ctf18, ctf8, dcc1, rfc2, rfc3, rfc4 and rfc5. The CTF18-RFC complex binds to single-stranded and primed DNAs and has weak ATPase activity that is stimulated by the presence of primed DNA, replication protein A (RPA) and by proliferating cell nuclear antigen (pcna). The CTF18-RFC complex catalyzes the ATP-dependent loading of pcna onto primed and gapped DNA. The sequence is that of Chromosome transmission fidelity protein 18 homolog (chtf18) from Xenopus laevis (African clawed frog).